Here is a 552-residue protein sequence, read N- to C-terminus: CTP synthase (552 aa).

Residues 1–265 (MTKYIFITGG…DEIVVRKLRL (265 aa)) form an amidoligase domain region. S13 contributes to the CTP binding site. S13 serves as a coordination point for UTP. ATP contacts are provided by residues 14-19 (SLGKGI) and D71. D71 and E139 together coordinate Mg(2+). Residues 146–148 (DIE), 186–191 (KTKPTQ), and K222 each bind CTP. UTP contacts are provided by residues 186–191 (KTKPTQ) and K222. In terms of domain architecture, Glutamine amidotransferase type-1 spans 290–541 (TVAMVGKYVN…VRAARARSEG (252 aa)). G351 contacts L-glutamine. Catalysis depends on C378, which acts as the Nucleophile; for glutamine hydrolysis. Residues 379-382 (LGMQ), E402, and R469 contribute to the L-glutamine site. Residues H514 and E516 contribute to the active site.

Belongs to the CTP synthase family. As to quaternary structure, homotetramer.

The catalysed reaction is UTP + L-glutamine + ATP + H2O = CTP + L-glutamate + ADP + phosphate + 2 H(+). It catalyses the reaction L-glutamine + H2O = L-glutamate + NH4(+). The enzyme catalyses UTP + NH4(+) + ATP = CTP + ADP + phosphate + 2 H(+). Its pathway is pyrimidine metabolism; CTP biosynthesis via de novo pathway; CTP from UDP: step 2/2. Allosterically activated by GTP, when glutamine is the substrate; GTP has no effect on the reaction when ammonia is the substrate. The allosteric effector GTP functions by stabilizing the protein conformation that binds the tetrahedral intermediate(s) formed during glutamine hydrolysis. Inhibited by the product CTP, via allosteric rather than competitive inhibition. Its function is as follows. Catalyzes the ATP-dependent amination of UTP to CTP with either L-glutamine or ammonia as the source of nitrogen. Regulates intracellular CTP levels through interactions with the four ribonucleotide triphosphates. The chain is CTP synthase from Methylococcus capsulatus (strain ATCC 33009 / NCIMB 11132 / Bath).